We begin with the raw amino-acid sequence, 152 residues long: Deoxyuridine 5'-triphosphate nucleotidohydrolase (152 aa).

Residues 71–73 (RSG), Asn-84, 88–90 (LID), and Met-98 contribute to the substrate site.

This sequence belongs to the dUTPase family. Requires Mg(2+) as cofactor.

It catalyses the reaction dUTP + H2O = dUMP + diphosphate + H(+). It participates in pyrimidine metabolism; dUMP biosynthesis; dUMP from dCTP (dUTP route): step 2/2. This enzyme is involved in nucleotide metabolism: it produces dUMP, the immediate precursor of thymidine nucleotides and it decreases the intracellular concentration of dUTP so that uracil cannot be incorporated into DNA. This Shigella flexneri protein is Deoxyuridine 5'-triphosphate nucleotidohydrolase.